A 428-amino-acid chain; its full sequence is Putative zinc metalloprotease SAR1238 (428 aa).

H21 is a Zn(2+) binding site. E22 is a catalytic residue. H25 is a Zn(2+) binding site. Transmembrane regions (helical) follow at residues 172–194 (FLTLFAGPLFNFILALVLFIGLA), 309–331 (GSTYIFSAVVGMLASIFTGGFSF), 352–374 (IISLIGYTALLSVNLGIMNLIPI), and 401–420 (TTIIAIGAIFMVVIMILVTW). The PDZ domain maps to 186-269 (ALVLFIGLAY…TKSVELTPKK (84 aa)).

The protein belongs to the peptidase M50B family. The cofactor is Zn(2+).

The protein localises to the cell membrane. The chain is Putative zinc metalloprotease SAR1238 from Staphylococcus aureus (strain MRSA252).